Here is a 256-residue protein sequence, read N- to C-terminus: Lysosomal membrane ascorbate-dependent ferrireductase CYB561A3 (256 aa).

The Cytoplasmic portion of the chain corresponds to 1 to 3 (MAS). Residues 4-24 (GWFYMSCMVLGSLGSMCILFT) traverse the membrane as a helical segment. The Cytochrome b561 domain maps to 12-219 (VLGSLGSMCI…FGLLVLYILL (208 aa)). At 25–40 (TYWMQYWRGGFAWDGT) the chain is on the lumenal side. A helical membrane pass occupies residues 41-61 (VLMFNWHPVLMVSGMVVLYGA). Heme b-binding residues include histidine 47 and arginine 67. The Cytoplasmic portion of the chain corresponds to 62 to 83 (ASLVYRLPASWVGPKLPWKVLH). L-ascorbate contacts are provided by lysine 76 and lysine 80. Histidine 83 serves as a coordination point for heme b. Residues 84–104 (AALHLLAFTVTVVGLTAVFGF) form a helical membrane-spanning segment. Residues 105–119 (HNHSKITHLYSLHSW) are Lumenal-facing. Residue asparagine 106 is glycosylated (N-linked (GlcNAc...) asparagine). Residues 112–115 (HLYS) and histidine 117 contribute to the heme b site. Residues 120 to 140 (LGITTVALFACQWFLGFAVFL) form a helical membrane-spanning segment. Topologically, residues 141–154 (LPWASQWLRSLLKP) are cytoplasmic. Arginine 149 is a binding site for L-ascorbate. Residues 155 to 175 (VHVFFGACILSLSIASVISGI) form a helical membrane-spanning segment. 2 residues coordinate heme b: histidine 156 and glutamate 177. Residues 176 to 202 (NEKLFFVLKNATRPYSSLPGEAVFANS) are Lumenal-facing. The helical transmembrane segment at 203-223 (TGILVVSFGLLVLYILLASSW) threads the bilayer. Arginine 224 contributes to the heme b binding site. At 224–256 (RRPDPGALTDRQVWLLVSHYRWDKAKKACFAPC) the chain is on the cytoplasmic side.

Homodimer. Heme b serves as cofactor. Post-translationally, N-glycosylated.

It localises to the late endosome membrane. The protein resides in the lysosome membrane. It carries out the reaction Fe(3+)(out) + L-ascorbate(in) = monodehydro-L-ascorbate radical(in) + Fe(2+)(out) + H(+). Transmembrane reductase that uses ascorbate as an electron donor in the cytoplasm and transfers electrons across membranes to reduce iron cations Fe(3+) into Fe(2+) in the lumen of the late endosome and lysosome. Reduced iron can then be extruded from the late endosome and lysosome to the cytoplasm by divalent metal-specific transporters. It is therefore most probably involved in endosomal and lysosomal cellular iron homeostasis. This is Lysosomal membrane ascorbate-dependent ferrireductase CYB561A3 from Rattus norvegicus (Rat).